The sequence spans 745 residues: Serine/threonine-protein kinase BUR1 (745 aa).

A disordered region spans residues 1–21; it reads MSVIAGHHVPRSNDQRQYDTP. The Protein kinase domain maps to 44–349; that stretch reads YEVIEKLGQG…ALDALNHKFF (306 aa). Residues 50–58 and Lys-73 each bind ATP; that span reads LGQGTFGVV. Residue Asp-179 is the Proton acceptor of the active site. Composition is skewed to basic and acidic residues over residues 380–406, 428–475, and 493–508; these read DKEQ…RYNA, DYID…DIQN, and KLRE…KKYD. Positions 380-701 are disordered; that stretch reads DKEQAVSELK…EVSDLEEDSD (322 aa). Positions 516–534 are enriched in low complexity; that stretch reads SRGSKSPSPSKLSSISQSK. A compositionally biased stretch (basic and acidic residues) spans 547 to 557; the sequence is ASRESSLERKQ. Polar residues-rich tracts occupy residues 558 to 567 and 586 to 598; these read VSNGIRTTTD and LTSN…PTRN. Residues 599–631 show a composition bias toward basic and acidic residues; it reads KSVERPKDLEKPTNGVTEDRNKKPVLEEKKEVV. The span at 632-660 shows a compositional bias: low complexity; it reads KPNLAIPKIKKSSSLVSLSSRSSTTPVIS. The span at 661 to 674 shows a compositional bias: polar residues; sequence NPSKVTKRAASSVT. Residues 692–701 show a composition bias toward acidic residues; that stretch reads EVSDLEEDSD.

This sequence belongs to the protein kinase superfamily. CMGC Ser/Thr protein kinase family. CDC2/CDKX subfamily.

It is found in the nucleus. It catalyses the reaction L-seryl-[protein] + ATP = O-phospho-L-seryl-[protein] + ADP + H(+). The enzyme catalyses L-threonyl-[protein] + ATP = O-phospho-L-threonyl-[protein] + ADP + H(+). The catalysed reaction is [DNA-directed RNA polymerase] + ATP = phospho-[DNA-directed RNA polymerase] + ADP + H(+). Serine/threonine-protein kinase involved in transcription regulation. Phosphorylates the UBC2/RAD6 ubiquitin-conjugating enzyme (E2), leading to monoubiquitination of histone H2B and the silencing of telomeric-associated genes. Also required for histone H3 methylation. Necessary for the recovery from pheromone-induced growth arrest in the cell cycle G1 phase. Required for pseudohyphal growth and virulence in mice. This Candida albicans (strain SC5314 / ATCC MYA-2876) (Yeast) protein is Serine/threonine-protein kinase BUR1 (CRK1).